The primary structure comprises 283 residues: E3 ubiquitin-protein ligase SGR9, amyloplastic (283 aa).

Residues 1–32 (MEDENTTIIMASLSALSPSHLTNLTHSILSIS) constitute an amyloplast transit peptide. An RING-type; atypical zinc finger spans residues 214–255 (CVICKEEMSEGRDVCEMPCQHFFHWKCILPWLSKKNTCPFCR).

Auto-ubiquitinated as part of the enzymatic reaction. Expressed in seedlings, hypocotyls, roots and stems. Present especially in hypocotyl and inflorescence endodermis, as well as in root cap columella, tissues that act as statocytes.

It is found in the plastid. The protein resides in the amyloplast. The enzyme catalyses S-ubiquitinyl-[E2 ubiquitin-conjugating enzyme]-L-cysteine + [acceptor protein]-L-lysine = [E2 ubiquitin-conjugating enzyme]-L-cysteine + N(6)-ubiquitinyl-[acceptor protein]-L-lysine.. It participates in protein modification; protein ubiquitination. E3 ubiquitin-protein ligase which accepts ubiquitin from an E2 ubiquitin-conjugating enzyme in the form of a thioester and then directly transfers the ubiquitin to targeted substrates. Modulates amyloplast dynamics and sedimentation in statocytes during inflorescence, hypocotyl and root gravitropism, probably by regulating amyloplast interaction with actin filaments (AFs) in endodermal cells. This is E3 ubiquitin-protein ligase SGR9, amyloplastic (SGR9) from Arabidopsis thaliana (Mouse-ear cress).